A 354-amino-acid chain; its full sequence is MEQNVFFLPHEGLKLAELAEFLGAELANSDHSDVIVRSVAPISRARAGDVCYILSRRNREEFATCEASAVICDKALADVVPPHLPVILSSNPHAAFAMAGGLFYPAALRPVAISGESEIAPSAVIDPSAKLEKGVIVEPLAVIGPHAEIGEGTRIGANSVIGPDVKIGRDCSIAAGASILCALIGNGVVIHNGVRIGQDGFGYAPGPRGMIKIVQIGRVIIQDNVEIGANTTIDRGAMDDTVIGEGTKIDNQVQIGHNVQIGRHCAIVSQVGIAGSTKIGNGVQIGGQVGIKGHVTIGDGVQIAAKSGIMTDLAAGGQYGGIPARPLKDYLREAAQQVSKSKLRGRNPGGKQND.

H257 acts as the Proton acceptor in catalysis. The interval 335-354 is disordered; the sequence is AQQVSKSKLRGRNPGGKQND.

The protein belongs to the transferase hexapeptide repeat family. LpxD subfamily. In terms of assembly, homotrimer.

It catalyses the reaction a UDP-3-O-[(3R)-3-hydroxyacyl]-alpha-D-glucosamine + a (3R)-hydroxyacyl-[ACP] = a UDP-2-N,3-O-bis[(3R)-3-hydroxyacyl]-alpha-D-glucosamine + holo-[ACP] + H(+). The protein operates within bacterial outer membrane biogenesis; LPS lipid A biosynthesis. Catalyzes the N-acylation of UDP-3-O-acylglucosamine using 3-hydroxyacyl-ACP as the acyl donor. Is involved in the biosynthesis of lipid A, a phosphorylated glycolipid that anchors the lipopolysaccharide to the outer membrane of the cell. This chain is UDP-3-O-acylglucosamine N-acyltransferase, found in Rhizobium etli (strain ATCC 51251 / DSM 11541 / JCM 21823 / NBRC 15573 / CFN 42).